We begin with the raw amino-acid sequence, 664 residues long: Bifunctional polymyxin resistance protein ArnA (664 aa).

Residues 1–308 (MSTKAVVFAY…EFGLVAGSQM (308 aa)) form a formyltransferase ArnAFT region. H106 (proton donor; for formyltransferase activity) is an active-site residue. Residues R116 and 138-142 (VKRAD) each bind (6R)-10-formyltetrahydrofolate. The interval 318 to 664 (RRTRVLILGV…EAMAEKADQC (347 aa)) is dehydrogenase ArnADH. Residues D351 and 372–373 (DI) contribute to the NAD(+) site. UDP-alpha-D-glucuronate contacts are provided by residues A397, Y402, and 436 to 437 (TS). E438 serves as the catalytic Proton acceptor; for decarboxylase activity. UDP-alpha-D-glucuronate contacts are provided by residues R464, N495, 529-538 (RLVDGGAQKR), and Y616. The active-site Proton donor; for decarboxylase activity is the R622.

The protein in the N-terminal section; belongs to the Fmt family. UDP-L-Ara4N formyltransferase subfamily. This sequence in the C-terminal section; belongs to the NAD(P)-dependent epimerase/dehydratase family. UDP-glucuronic acid decarboxylase subfamily. Homohexamer, formed by a dimer of trimers.

It carries out the reaction UDP-alpha-D-glucuronate + NAD(+) = UDP-beta-L-threo-pentopyranos-4-ulose + CO2 + NADH. The enzyme catalyses UDP-4-amino-4-deoxy-beta-L-arabinose + (6R)-10-formyltetrahydrofolate = UDP-4-deoxy-4-formamido-beta-L-arabinose + (6S)-5,6,7,8-tetrahydrofolate + H(+). It functions in the pathway nucleotide-sugar biosynthesis; UDP-4-deoxy-4-formamido-beta-L-arabinose biosynthesis; UDP-4-deoxy-4-formamido-beta-L-arabinose from UDP-alpha-D-glucuronate: step 1/3. Its pathway is nucleotide-sugar biosynthesis; UDP-4-deoxy-4-formamido-beta-L-arabinose biosynthesis; UDP-4-deoxy-4-formamido-beta-L-arabinose from UDP-alpha-D-glucuronate: step 3/3. It participates in bacterial outer membrane biogenesis; lipopolysaccharide biosynthesis. In terms of biological role, bifunctional enzyme that catalyzes the oxidative decarboxylation of UDP-glucuronic acid (UDP-GlcUA) to UDP-4-keto-arabinose (UDP-Ara4O) and the addition of a formyl group to UDP-4-amino-4-deoxy-L-arabinose (UDP-L-Ara4N) to form UDP-L-4-formamido-arabinose (UDP-L-Ara4FN). The modified arabinose is attached to lipid A and is required for resistance to polymyxin and cationic antimicrobial peptides. In Pseudomonas syringae pv. syringae (strain B728a), this protein is Bifunctional polymyxin resistance protein ArnA.